We begin with the raw amino-acid sequence, 150 residues long: 1,4-dihydroxy-2-naphthoyl-CoA hydrolase (150 aa).

Asp19 is a catalytic residue.

It belongs to the 4-hydroxybenzoyl-CoA thioesterase family. DHNA-CoA hydrolase subfamily.

The catalysed reaction is 1,4-dihydroxy-2-naphthoyl-CoA + H2O = 1,4-dihydroxy-2-naphthoate + CoA + H(+). Its pathway is cofactor biosynthesis; phylloquinone biosynthesis. The protein operates within quinol/quinone metabolism; 1,4-dihydroxy-2-naphthoate biosynthesis; 1,4-dihydroxy-2-naphthoate from chorismate: step 7/7. Functionally, catalyzes the hydrolysis of 1,4-dihydroxy-2-naphthoyl-CoA (DHNA-CoA) to 1,4-dihydroxy-2-naphthoate (DHNA), a reaction involved in phylloquinone (vitamin K1) biosynthesis. The polypeptide is 1,4-dihydroxy-2-naphthoyl-CoA hydrolase (Prochlorococcus marinus (strain MIT 9312)).